We begin with the raw amino-acid sequence, 236 residues long: Orotidine 5'-phosphate decarboxylase (236 aa).

Residues D16, K38, 65 to 74, T123, R184, Q193, G213, and R214 contribute to the substrate site; that span reads DLKLHDIGNT. Catalysis depends on K67, which acts as the Proton donor.

It belongs to the OMP decarboxylase family. Type 1 subfamily. In terms of assembly, homodimer.

It carries out the reaction orotidine 5'-phosphate + H(+) = UMP + CO2. Its pathway is pyrimidine metabolism; UMP biosynthesis via de novo pathway; UMP from orotate: step 2/2. Functionally, catalyzes the decarboxylation of orotidine 5'-monophosphate (OMP) to uridine 5'-monophosphate (UMP). This is Orotidine 5'-phosphate decarboxylase from Methylobacterium sp. (strain 4-46).